Consider the following 315-residue polypeptide: Protein OPG185 (315 aa).

The first 16 residues, 1-16, serve as a signal peptide directing secretion; it reads MARLPILLLLISLVYS. An Ig-like V-type domain is found at 17–121; that stretch reads TPSPQTSKKI…NDTDKVDYEE (105 aa). Topologically, residues 17–279 are virion surface; the sequence is TPSPQTSKKI…SNYKTKDFVE (263 aa). A disulfide bridge connects residues cysteine 34 and cysteine 103. Asparagine 37, asparagine 69, asparagine 112, and asparagine 161 each carry an N-linked (GlcNAc...) asparagine; by host glycan. Over residues 192-202 the composition is skewed to polar residues; the sequence is INTVSASSGES. Residues 192 to 214 form a disordered region; the sequence is INTVSASSGESTTDETPEPITDK. Asparagine 254 is a glycosylation site (N-linked (GlcNAc...) asparagine; by host). A helical membrane pass occupies residues 280 to 303; sequence IFGITALIILSAVAIFCITYYIYN. Topologically, residues 304-315 are intravirion; it reads KRSRKYKTENKV.

The protein belongs to the orthopoxvirus OPG185 family. In terms of assembly, heterodimerizes with OPG040. The heterodimer OPG185-OPG040 interacts with components of the entry fusion complex OPG143 and OPG094. Heterodimer with C3/VPC protein; disulfide-linked. Post-translationally, glycosylated; contains phosphate and sulfate-substituted glycans. O-glycosylation is required for hemagglutination and hemadsorption activities of infected cell membranes.

The protein resides in the virion membrane. It is found in the host membrane. Prevents cell to cell fusion by interacting with and directing the viral OPG040 protein on the host plasma membrane. The OPG185-OPG040 complex associates with components of the entry fusion complex (EFC) presumably to avoid superinfection and syncytium formation. Via its interaction with C3/VCP protein, protects the infected cell and probably also the extracellular enveloped virus from complement attack. The chain is Protein OPG185 (OPG185) from Vaccinia virus (strain Tian Tan) (VACV).